The following is a 341-amino-acid chain: HTH-type transcriptional repressor PurR (341 aa).

Residues 2–56 (ATIKDVAKHAGVSTTTVSHVINKTRFVAEDTKAAVWAAIKALNYSPSAVARSLKV) enclose the HTH lacI-type domain. A DNA-binding region (H-T-H motif) is located at residues 4 to 23 (IKDVAKHAGVSTTTVSHVIN). Residues 48–56 (SAVARSLKV) mediate DNA binding. Tyr73, Arg190, Thr192, Phe221, and Asp275 together coordinate hypoxanthine.

As to quaternary structure, homodimer.

It participates in purine metabolism; purine nucleotide biosynthesis [regulation]. In terms of biological role, is the main repressor of the genes involved in the de novo synthesis of purine nucleotides, regulating purB, purC, purEK, purF, purHD, purL, purMN and guaBA expression. PurR is allosterically activated to bind its cognate DNA by binding the purine corepressors, hypoxanthine or guanine, thereby effecting transcription repression. The sequence is that of HTH-type transcriptional repressor PurR from Photorhabdus laumondii subsp. laumondii (strain DSM 15139 / CIP 105565 / TT01) (Photorhabdus luminescens subsp. laumondii).